A 442-amino-acid polypeptide reads, in one-letter code: tRNA(Ile)-lysidine synthase (442 aa).

27-32 contacts ATP; that stretch reads SGGLDS.

This sequence belongs to the tRNA(Ile)-lysidine synthase family.

Its subcellular location is the cytoplasm. The catalysed reaction is cytidine(34) in tRNA(Ile2) + L-lysine + ATP = lysidine(34) in tRNA(Ile2) + AMP + diphosphate + H(+). In terms of biological role, ligates lysine onto the cytidine present at position 34 of the AUA codon-specific tRNA(Ile) that contains the anticodon CAU, in an ATP-dependent manner. Cytidine is converted to lysidine, thus changing the amino acid specificity of the tRNA from methionine to isoleucine. This is tRNA(Ile)-lysidine synthase from Photorhabdus laumondii subsp. laumondii (strain DSM 15139 / CIP 105565 / TT01) (Photorhabdus luminescens subsp. laumondii).